Reading from the N-terminus, the 570-residue chain is MKTSLQIAAEATPRPITQIAEELAIAEQFVEPYGRYRAKINLDLLDASHDRPRGKQILVTAMTPTPLGEGKTATTIGLGMALSRLGKRAICTLRQSSLGPVFGIKGGGSGGGYSQVIPLEDSLMHLTGDIHAVTQAHNQIAAMTDNSWYQKNRLGIDPEQIQIRRVLDVNDRFLRSITIGQGGSQHGIPRQTGFDITAASELMAILALVSGENHADVMRDLRQRIGRMVVAFTRQGQPITADDIQAAGAATVIMRNAIHPTLMQTIENTPVLMHGGPFANIAHGNASVVADQVGLRIADYVVTEAGFAMDMGGEKFFDIKCRAFDAKPAVVVLVATIRALKAHSGRWNIKPGRDLPTDLLQENPDAVYAGGANLQKHIRNAQLFGLPVVVALNSFPDDHPSEIEAVREIAMSAGAFDVAVSKVFSQGGVGGEELAEKVLAAIDQAGQAQFLYELEQPLTAKIATIATKIYGAAEVSYSEAASEQLAKLEANGFGNLPICMAKTHLSISHDPALKGAPTGYSFPIREVRASIGAGFIYPIAGDMMTMPGLSANPAAQQIDIDEHGNTVGLF.

65-72 (TPLGEGKT) contacts ATP.

The protein belongs to the formate--tetrahydrofolate ligase family.

It catalyses the reaction (6S)-5,6,7,8-tetrahydrofolate + formate + ATP = (6R)-10-formyltetrahydrofolate + ADP + phosphate. It participates in one-carbon metabolism; tetrahydrofolate interconversion. The sequence is that of Formate--tetrahydrofolate ligase from Herpetosiphon aurantiacus (strain ATCC 23779 / DSM 785 / 114-95).